A 334-amino-acid chain; its full sequence is Ornithine carbamoyltransferase subunit F (334 aa).

Carbamoyl phosphate-binding positions include 56-59 (STRT), Gln-83, Arg-107, and 134-137 (HPTQ). Residues Asn-168, Asp-232, and 236 to 237 (SM) contribute to the L-ornithine site. Residues 274 to 275 (CL) and Arg-320 contribute to the carbamoyl phosphate site.

Belongs to the aspartate/ornithine carbamoyltransferase superfamily. OTCase family. As to quaternary structure, in E.coli strain K12, trimer of identical or non-identical chains are composed of ArgI (I) and/or ArgF (F). The trimer has the following composition: FFI, FFF, FII, III. E.coli strains B and W, which are known to contain only ArgI, produce only a trimer of identical chains (III).

Its subcellular location is the cytoplasm. The enzyme catalyses carbamoyl phosphate + L-ornithine = L-citrulline + phosphate + H(+). The protein operates within amino-acid biosynthesis; L-arginine biosynthesis; L-arginine from L-ornithine and carbamoyl phosphate: step 1/3. Functionally, reversibly catalyzes the transfer of the carbamoyl group from carbamoyl phosphate (CP) to the N(epsilon) atom of ornithine (ORN) to produce L-citrulline, which is a substrate for argininosuccinate synthetase, the enzyme involved in the final step in arginine biosynthesis. This Escherichia coli (strain K12) protein is Ornithine carbamoyltransferase subunit F.